Reading from the N-terminus, the 64-residue chain is Large ribosomal subunit protein uL29 (64 aa).

This sequence belongs to the universal ribosomal protein uL29 family.

The sequence is that of Large ribosomal subunit protein uL29 from Synechococcus elongatus (strain ATCC 33912 / PCC 7942 / FACHB-805) (Anacystis nidulans R2).